A 99-amino-acid chain; its full sequence is Integration host factor subunit alpha (99 aa).

A disordered region spans residues 49-75 (FGNFDLRDKNQRPGRNPKTGEDIPITA).

The protein belongs to the bacterial histone-like protein family. In terms of assembly, heterodimer of an alpha and a beta chain.

Its function is as follows. This protein is one of the two subunits of integration host factor, a specific DNA-binding protein that functions in genetic recombination as well as in transcriptional and translational control. The sequence is that of Integration host factor subunit alpha from Salmonella agona (strain SL483).